Here is a 262-residue protein sequence, read N- to C-terminus: 5'-nucleotidase SurE (262 aa).

The a divalent metal cation site is built by Asp9, Asp10, Ser40, and Asn95.

The protein belongs to the SurE nucleotidase family. Requires a divalent metal cation as cofactor.

It localises to the cytoplasm. It carries out the reaction a ribonucleoside 5'-phosphate + H2O = a ribonucleoside + phosphate. Its function is as follows. Nucleotidase that shows phosphatase activity on nucleoside 5'-monophosphates. The chain is 5'-nucleotidase SurE from Aliarcobacter butzleri (strain RM4018) (Arcobacter butzleri).